The following is a 670-amino-acid chain: Transketolase (670 aa).

A substrate-binding site is contributed by His-31. Residues His-71 and 120–122 contribute to the thiamine diphosphate site; that span reads GPL. Asp-161 serves as a coordination point for Mg(2+). Gly-162 and Asn-191 together coordinate thiamine diphosphate. Mg(2+) contacts are provided by Asn-191 and Ile-193. 3 residues coordinate substrate: His-268, Arg-362, and Ser-389. His-268 contacts thiamine diphosphate. Residue Glu-416 is the Proton donor of the active site. Phe-443 serves as a coordination point for thiamine diphosphate. Residues His-467, Asp-475, and Arg-528 each contribute to the substrate site.

Homodimer. Mg(2+) serves as cofactor. The cofactor is Ca(2+). Requires Mn(2+) as cofactor. Co(2+) is required as a cofactor. It depends on thiamine diphosphate as a cofactor.

The enzyme catalyses D-sedoheptulose 7-phosphate + D-glyceraldehyde 3-phosphate = aldehydo-D-ribose 5-phosphate + D-xylulose 5-phosphate. Functionally, catalyzes the transfer of a two-carbon ketol group from a ketose donor to an aldose acceptor, via a covalent intermediate with the cofactor thiamine pyrophosphate. The chain is Transketolase (tkt) from Nostoc sp. (strain PCC 7120 / SAG 25.82 / UTEX 2576).